The sequence spans 126 residues: Histone H2B 7 (126 aa).

Residues 1–12 (MPEPAKSAPAPK) are compositionally biased toward low complexity. The disordered stretch occupies residues 1–35 (MPEPAKSAPAPKKGSKKAVTKTQKKGDKKRKRARK). K6 and K13 each carry N6-acetyllysine. Residues 13 to 34 (KGSKKAVTKTQKKGDKKRKRAR) are compositionally biased toward basic residues. S15 carries the phosphoserine modification. 2 positions are modified to N6-acetyllysine: K16 and K21. A glycan (O-linked (GlcNAc) serine) is linked at S113. Residue K121 forms a Glycyl lysine isopeptide (Lys-Gly) (interchain with G-Cter in ubiquitin) linkage.

It belongs to the histone H2B family. As to quaternary structure, the nucleosome is a histone octamer containing two molecules each of H2A, H2B, H3 and H4 assembled in one H3-H4 heterotetramer and two H2A-H2B heterodimers. The octamer wraps approximately 147 bp of DNA. In terms of processing, monoubiquitination of Lys-121 by the BRE1 gives a specific tag for epigenetic transcriptional activation and is also prerequisite for histone H3 'Lys-4' and 'Lys-79' methylation. Phosphorylated on Ser-15 during apoptosis; which facilitates apoptotic chromatin condensation. Post-translationally, glcNAcylation at Ser-113 promotes monoubiquitination of Lys-121. It fluctuates in response to extracellular glucose, and associates with transcribed genes.

It is found in the nucleus. Its subcellular location is the chromosome. Its function is as follows. Core component of nucleosome. Nucleosomes wrap and compact DNA into chromatin, limiting DNA accessibility to the cellular machineries which require DNA as a template. Histones thereby play a central role in transcription regulation, DNA repair, DNA replication and chromosomal stability. DNA accessibility is regulated via a complex set of post-translational modifications of histones, also called histone code, and nucleosome remodeling. The protein is Histone H2B 7 (H2B-VII) of Gallus gallus (Chicken).